We begin with the raw amino-acid sequence, 779 residues long: Protein WEAK CHLOROPLAST MOVEMENT UNDER BLUE LIGHT-like 1 (779 aa).

Positions 1–119 (MEDLKTTDAL…NAVSPRPLYS (119 aa)) are disordered. The span at 79–88 (DSPTTPSFVS) shows a compositional bias: polar residues. Position 139 is a phosphoserine (Ser139). 3 coiled-coil regions span residues 182-503 (RMKV…KQRE), 532-587 (KETR…ESRL), and 657-715 (AVSE…KWRE). The span at 650–661 (ANARVAAAVSEV) shows a compositional bias: low complexity. Disordered regions lie at residues 650 to 674 (ANAR…SLEK) and 694 to 759 (EKAE…NPVK). 2 stretches are compositionally biased toward basic and acidic residues: residues 662–674 (GEAK…SLEK) and 694–718 (EKAE…EVSE). Over residues 741–753 (TSVSNETETNPIP) the composition is skewed to polar residues.

The protein belongs to the WEB family.

This chain is Protein WEAK CHLOROPLAST MOVEMENT UNDER BLUE LIGHT-like 1 (WEL1), found in Arabidopsis thaliana (Mouse-ear cress).